A 341-amino-acid polypeptide reads, in one-letter code: MALPAIPQPLLTPLTEAAIFLVFTIDEGGEQAVHDVLADISGLQRSIGFRVPAGGLAAVVGIGSDAWDRLFEGPRPAELHPFVELTGDKHHAPRTPGDLLFHIRARQMDLCFEFATVVTNRLAGAASVIDEVHGFKYFEQRDLMGFVDGTENPSGQAAYVAVTVGDEDPDFAGSSYVIVQKYLHDMSEWNSLPVEEQENVIGRSKLEDLEMDDDTKPANSHTALTVIEDESGEQIQILRDNMPFGHVGSAEMGTYFIGYSASPTVTEQMLTNMFIGNPVGNYDRILDFSTAVTGINFFVPTADFLDDPPDAPTRLVPEATFTAPISDGSLGIGSLKRSAQQ.

D148 functions as the Proton acceptor in the catalytic mechanism. Residue H221 coordinates heme. The targeting peptide stretch occupies residues 304-341 (FLDDPPDAPTRLVPEATFTAPISDGSLGIGSLKRSAQQ).

Belongs to the DyP-type peroxidase family. As to quaternary structure, homohexamer. Requires heme b as cofactor.

It is found in the encapsulin nanocompartment. Functionally, cargo protein of a type 1 encapsulin nanocompartment. Has both general peroxidase activity and dye-decolorizing activity. Can catalyze the oxidation of both protoporphyrinogen IX and coproporphyrinogen III to their corresponding porphyrins. Also efficiently decolorizes the dyes alizarin red and Cibacron blue F3GA. This cargo-loaded encapsulin nanocompartment is probably involved in protection against oxidative damage. The protein is Dye-decolorizing peroxidase of Rhodococcus erythropolis (strain PR4 / NBRC 100887).